A 213-amino-acid polypeptide reads, in one-letter code: NAD(P)H-hydrate epimerase (213 aa).

The region spanning 8–210 is the YjeF N-terminal domain; the sequence is MYNIEENGHA…KIGIPPEAEK (203 aa). 55–59 lines the (6S)-NADPHX pocket; sequence NNGGD. The K(+) site is built by Asn56 and Asp122. (6S)-NADPHX-binding positions include 126–132, Tyr137, and Asp155; that span reads GTGITGE. Ser158 provides a ligand contact to K(+).

Belongs to the NnrE/AIBP family. Requires K(+) as cofactor.

It carries out the reaction (6R)-NADHX = (6S)-NADHX. The enzyme catalyses (6R)-NADPHX = (6S)-NADPHX. Functionally, catalyzes the epimerization of the S- and R-forms of NAD(P)HX, a damaged form of NAD(P)H that is a result of enzymatic or heat-dependent hydration. This is a prerequisite for the S-specific NAD(P)H-hydrate dehydratase to allow the repair of both epimers of NAD(P)HX. In Cenarchaeum symbiosum (strain A), this protein is NAD(P)H-hydrate epimerase.